A 115-amino-acid polypeptide reads, in one-letter code: Nucleoid-associated protein Ava_2322 (115 aa).

This sequence belongs to the YbaB/EbfC family. In terms of assembly, homodimer.

Its subcellular location is the cytoplasm. The protein resides in the nucleoid. Binds to DNA and alters its conformation. May be involved in regulation of gene expression, nucleoid organization and DNA protection. The chain is Nucleoid-associated protein Ava_2322 from Trichormus variabilis (strain ATCC 29413 / PCC 7937) (Anabaena variabilis).